The following is a 284-amino-acid chain: Xyloglucan endotransglucosylase/hydrolase protein 22 (284 aa).

Residues methionine 1–alanine 21 form the signal peptide. The 190-residue stretch at asparagine 22–tyrosine 211 folds into the GH16 domain. Glutamate 97 acts as the Nucleophile in catalysis. Residue glutamate 101 is the Proton donor of the active site. Residue glutamate 101 coordinates xyloglucan. An N-linked (GlcNAc...) asparagine glycan is attached at asparagine 105. Xyloglucan-binding positions include histidine 114 to asparagine 116, aspartate 124 to glutamate 126, aspartate 190 to tryptophan 191, and glycine 195. Cysteine 219 and cysteine 228 are disulfide-bonded. Asparagine 230 is a glycosylation site (N-linked (GlcNAc...) asparagine). Cysteines 267 and 281 form a disulfide. Arginine 272 is a xyloglucan binding site.

It belongs to the glycosyl hydrolase 16 family. XTH group 2 subfamily. In terms of processing, contains at least one intrachain disulfide bond essential for its enzymatic activity. Post-translationally, N-glycosylated; essential for its enzymatic activity. As to expression, highly expressed. Predominantly expressed in green siliques. Expressed in young expanding leaves, trichomes, lateral root primordia, vascular tissue, abscission zones and elongating hypocols. Following wind stimulation, it decreases in the leaves of wind-stimulated plants, while it strongly increases in sites around cells of the pith parenchyma, between the vascular elements, and within the epidermis.

It localises to the secreted. Its subcellular location is the cell wall. It is found in the extracellular space. The protein localises to the apoplast. The enzyme catalyses breaks a beta-(1-&gt;4) bond in the backbone of a xyloglucan and transfers the xyloglucanyl segment on to O-4 of the non-reducing terminal glucose residue of an acceptor, which can be a xyloglucan or an oligosaccharide of xyloglucan.. Its function is as follows. Catalyzes xyloglucan endohydrolysis (XEH) and/or endotransglycosylation (XET). Cleaves and religates xyloglucan polymers, an essential constituent of the primary cell wall, and thereby participates in cell wall construction of growing tissues. Its induction in case of mechanical stress, suggests that it may contribute in the adaptive changes in morphogenesis by being recruited to alter tissues tensil strength, or flexibility, enabling adaptation to mechanically stressful environments. The chain is Xyloglucan endotransglucosylase/hydrolase protein 22 (XTH22) from Arabidopsis thaliana (Mouse-ear cress).